Consider the following 683-residue polypeptide: THO complex subunit 5 homolog (683 aa).

Residues 1-42 (MSSESSKKRKPKVIRSDGTPTEGKRNRSDTEQEGKYYSEEAE) are disordered. Position 2 is an N-acetylserine (S2). The tract at residues 2-144 (SSESSKKRKP…YEVMHLQKEI (143 aa)) is interaction with CSF1R. The interaction with THOC7 stretch occupies residues 2 to 199 (SSESSKKRKP…RLDWELEQRK (198 aa)). Phosphoserine is present on residues S5 and S6. The Nuclear localization signal signature appears at 7–10 (KKRK). A compositionally biased stretch (basic and acidic residues) spans 22-42 (EGKRNRSDTEQEGKYYSEEAE). A coiled-coil region spans residues 81-247 (AIEIEERRIQ…QASLPVQEYL (167 aa)). Residue K153 forms a Glycyl lysine isopeptide (Lys-Gly) (interchain with G-Cter in SUMO2) linkage. Residue Y225 is modified to Phosphotyrosine. The tandem RWD domains stretch occupies residues 247–683 (LFMPFDQAHK…NHPQGFFSHR (437 aa)). The interval 301 to 336 (FKPPEDSQDDESDSDAEEEQTTKRRRPTLGVQLDDK) is disordered. A compositionally biased stretch (acidic residues) spans 306–319 (DSQDDESDSDAEEE). A phosphoserine mark is found at S307, S312, and S314. T328 carries the post-translational modification Phosphothreonine.

Belongs to the THOC5 family. As to quaternary structure, component of the THO subcomplex, which is composed of THOC1, THOC2, THOC3, THOC5, THOC6 and THOC7. The THO subcomplex interacts with DDX39B to form the THO-DDX39B complex which multimerizes into a 28-subunit tetrameric assembly. Component of the transcription/export (TREX) complex at least composed of ALYREF/THOC4, DDX39B, SARNP/CIP29, CHTOP and the THO subcomplex; in the complex interacts with THOC1, THOC2, THOC5, THOC6 and THOC7; forms a coiled-coil dimer with THOC7; together with THOC6 and THOC7, plays a key structural role in the oligomerization of the THO-DDX39B complex. TREX seems to have a dynamic structure involving ATP-dependent remodeling. Interacts (via N-terminus) with the NTF2 domain of NXF1. Interacts with phosphorylated CSF1R. Forms a complex with CEBPB. Interacts with CPSF6; indicative for an association with the cleavage factor Im (CFIm) complex. Interacts with THOC1. Interacts with LUZP4. Interacts with NCBP3. In terms of processing, phosphorylated on tyrosine upon binding to activated CSF1R; which causes a dissociation of the two proteins. Phosphorylation on Ser-5 and/or Ser-6 is required for nuclear export. Phosphorylated on Thr-328 in insulin-stimulated adipocytes. As to expression, ubiquitously expressed, with highest levels in testis, liver and heart.

It localises to the nucleus. The protein resides in the cytoplasm. In terms of biological role, component of the THO subcomplex of the TREX complex which is thought to couple mRNA transcription, processing and nuclear export, and which specifically associates with spliced mRNA and not with unspliced pre-mRNA. Plays a key structural role in the oligomerization of the THO-DDX39B complex. TREX is recruited to spliced mRNAs by a transcription-independent mechanism, binds to mRNA upstream of the exon-junction complex (EJC) and is recruited in a splicing- and cap-dependent manner to a region near the 5' end of the mRNA where it functions in mRNA export to the cytoplasm via the TAP/NXF1 pathway. THOC5 in conjunction with ALYREF/THOC4 functions in NXF1-NXT1 mediated nuclear export of HSP70 mRNA; both proteins enhance the RNA binding activity of NXF1 and are required for NXF1 localization to the nuclear rim. Involved in transcription elongation and genome stability. Involved in alternative polyadenylation site choice by recruiting CPSF6 to 5' region of target genes; probably mediates association of the TREX and CFIm complexes. Functionally, regulates the expression of myeloid transcription factors CEBPA, CEBPB and GAB2 by enhancing the levels of phosphatidylinositol 3,4,5-trisphosphate. May be involved in the differentiation of granulocytes and adipocytes. Essential for hematopoietic primitive cell survival and plays an integral role in monocytic development. This Mus musculus (Mouse) protein is THO complex subunit 5 homolog (Thoc5).